Reading from the N-terminus, the 657-residue chain is Single-minded homolog 2 (657 aa).

In terms of domain architecture, bHLH spans 1–53; sequence MKEKSKNAAKTRREKENGEFYELAKLLPLPSAITSQLDKASIIRLTTSYLKMR. PAS domains follow at residues 77-147 and 218-288; these read AKEL…PPLH and PPSA…LVKG. The PAC domain occupies 218 to 288; sequence PPSAITEIKL…YAHHLLLVKG (71 aa). A Single-minded C-terminal domain is found at 336-657; that stretch reads EYKELQLSLD…GASVIITNGR (322 aa). A compositionally biased stretch (polar residues) spans 354–364; it reads ESWRTTLSTSQ. 2 disordered regions span residues 354–387 and 612–641; these read ESWR…NPYP and LGSA…APGA. The short motif at 367 to 386 is the Nuclear localization signal element; that stretch reads RKSAKPKNTKMKTKLRTNPY. Residues 369 to 381 are compositionally biased toward basic residues; it reads SAKPKNTKMKTKL.

In terms of assembly, efficient DNA binding requires dimerization with another bHLH protein. Heterodimer of SIM2 and ARNT. As to expression, transcripts were detected in high levels in kidney followed by skeletal muscle and lung. Low levels were found in testis, brain and heart. In early fetal development it is found in CNS, developing kidney, tongue epithelium and cartilage primordia.

The protein localises to the nucleus. In terms of biological role, transcription factor that may be a master gene of CNS development in cooperation with Arnt. It may have pleiotropic effects in the tissues expressed during development. The chain is Single-minded homolog 2 (Sim2) from Mus musculus (Mouse).